A 261-amino-acid polypeptide reads, in one-letter code: Guanine nucleotide exchange factor BopE (261 aa).

Basic and acidic residues predominate over residues 241–253 (RRAAQDASRDEKG). Residues 241–261 (RRAAQDASRDEKGAANAADGA) are disordered.

Belongs to the GEF (guanine exchange factor) SopE family. As to quaternary structure, monomer. Interacts with human CDC42.

The protein localises to the secreted. Activator for both CDC42 and RAC1 by directly interacting with these Rho GTPases and acting as a guanine nucleotide exchange factor (GEF). This activation results in actin cytoskeleton rearrangements and stimulates membrane ruffling, thus promoting bacterial entry into non-phagocytic cells. In Burkholderia thailandensis (strain ATCC 700388 / DSM 13276 / CCUG 48851 / CIP 106301 / E264), this protein is Guanine nucleotide exchange factor BopE (bopE).